Here is a 101-residue protein sequence, read N- to C-terminus: Enhancer of yellow 2 transcription factor (101 aa).

It belongs to the ENY2 family. In terms of assembly, component of the nuclear pore complex (NPC)-associated AMEX complex (anchoring and mRNA export complex), composed of at least e(y)2 and xmas-2. Component of the SAGA transcription coactivator-HAT complexes, at least composed of Ada2b, e(y)2, Pcaf/Gcn5, Taf10 and Nipped-A/Trrap. Within the SAGA complex, e(y)2, Sgf11, and not/nonstop form an additional subcomplex of SAGA called the DUB module (deubiquitination module). Component of the THO complex, composed of at least e(y)2, HPR1, THO2, THOC5, THOC6 and THOC7. Interacts with e(y)1. Interacts with su(Hw) (via zinc fingers). Interacts with xmas-2; required for localization to the nuclear periphery. Interacts with the nuclear pore complex (NPC).

It is found in the nucleus. It localises to the nucleoplasm. The protein localises to the cytoplasm. Functionally, involved in mRNA export coupled transcription activation by association with both the AMEX and the SAGA complexes. The SAGA complex is a multiprotein complex that activates transcription by remodeling chromatin and mediating histone acetylation and deubiquitination. Within the SAGA complex, participates in a subcomplex that specifically deubiquitinates histone H2B. The SAGA complex is recruited to specific gene promoters by activators, where it is required for transcription. Required for nuclear receptor-mediated transactivation. Involved in transcription elongation by recruiting the THO complex onto nascent mRNA. The AMEX complex functions in docking export-competent ribonucleoprotein particles (mRNPs) to the nuclear entrance of the nuclear pore complex (nuclear basket). AMEX participates in mRNA export and accurate chromatin positioning in the nucleus by tethering genes to the nuclear periphery. The protein is Enhancer of yellow 2 transcription factor of Drosophila simulans (Fruit fly).